Reading from the N-terminus, the 588-residue chain is Protein cereblon (588 aa).

Disordered regions lie at residues 1–107 (MDDE…DDSD) and 159–197 (QERR…DIGF). A compositionally biased stretch (polar residues) spans 41–50 (AWNNATQDEQ). Residues 75–85 (MVEDVLQDDTA) show a composition bias toward acidic residues. The segment covering 86-96 (SEGSHPSSDMS) has biased composition (polar residues). Residues 159 to 168 (QERRRSRTSE) are compositionally biased toward basic and acidic residues. The segment covering 181–192 (NDPPPQQPPRPP) has biased composition (pro residues). Positions 228-454 (HMLIFLHQHI…LIKSTFKDES (227 aa)) constitute a Lon N-terminal domain. Positions 453–562 (ESLFFCRYCN…LAGSSVRIGK (110 aa)) constitute a CULT domain. The Zn(2+) site is built by Cys-458, Cys-461, Cys-527, and Cys-530.

The protein belongs to the CRBN family. In terms of assembly, likely a component of a DCX (DDB1-CUL4-X-box) protein ligase complex. May interact with pic/DDB1. Post-translationally, ubiquitinated.

The protein localises to the nucleus. It participates in protein modification; protein ubiquitination. Its function is as follows. Substrate recognition component of a DCX (DDB1-CUL4-X-box) E3 protein ligase complex that mediates the ubiquitination and subsequent proteasomal degradation of target proteins. Has an essential role in mediating growth by negatively regulating insulin signaling. It also has a role in maintaining presynaptic function in the neuromuscular junction synapses of third-instar larvae. This Drosophila yakuba (Fruit fly) protein is Protein cereblon.